Here is a 690-residue protein sequence, read N- to C-terminus: Proprotein convertase subtilisin/kexin type 9 (690 aa).

Residues 1-28 form the signal peptide; it reads MGTVRSRRLWWPLPLLLLLLLGPAGARA. Residues 29 to 150 constitute a propeptide that is removed on maturation; that stretch reads QEDDDGDYEE…IEEDSYVFAQ (122 aa). Y36 carries the post-translational modification Sulfotyrosine. Position 45 is a phosphoserine (S45). Positions 75–147 constitute an Inhibitor I9 domain; that stretch reads TYVVVLKEET…VDYIEEDSYV (73 aa). Residues 153–459 form the Peptidase S8 domain; sequence PWNLERITPA…GWQLFCRTVW (307 aa). Catalysis depends on charge relay system residues D184 and H224. 2 disulfide bridges follow: C221/C253 and C321/C356. S384 functions as the Charge relay system in the catalytic mechanism. Positions 448 to 690 are C-terminal domain; it reads GAGWQLFCRT…HLAQASQELQ (243 aa). 3 disulfide bridges follow: C455–C525, C475–C524, and C484–C507. N531 carries N-linked (GlcNAc...) asparagine glycosylation. 6 cysteine pairs are disulfide-bonded: C532/C599, C550/C598, C560/C586, C606/C677, C624/C676, and C633/C652. Phosphoserine is present on S686.

The protein belongs to the peptidase S8 family. In terms of assembly, monomer. Can self-associate to form dimers and higher multimers which may have increased LDLR degrading activity. The precursor protein but not the mature protein may form multimers. Interacts with APOB, VLDLR, LRP8/APOER2 and BACE1. The full-length immature form (pro-PCSK9) interacts with SCNN1A, SCNN1B and SCNN1G. The pro-PCSK9 form (via C-terminal domain) interacts with LDLR. Interacts (via the C-terminal domain) with ANXA2 (via repeat Annexin 1); the interaction inhibits the degradation of LDLR. It depends on Ca(2+) as a cofactor. Post-translationally, cleavage by furin and PCSK5 generates a truncated inactive protein that is unable to induce LDLR degradation. Undergoes autocatalytic cleavage in the endoplasmic reticulum to release the propeptide from the N-terminus and the cleavage of the propeptide is strictly required for its maturation and activation. The cleaved propeptide however remains associated with the catalytic domain through non-covalent interactions, preventing potential substrates from accessing its active site. As a result, it is secreted from cells as a propeptide-containing, enzymatically inactive protein. In terms of processing, phosphorylation protects the propeptide against proteolysis.

It is found in the cytoplasm. Its subcellular location is the secreted. The protein resides in the endosome. The protein localises to the lysosome. It localises to the cell surface. It is found in the endoplasmic reticulum. Its subcellular location is the golgi apparatus. Its activity is regulated as follows. Its proteolytic activity is autoinhibited by the non-covalent binding of the propeptide to the catalytic domain. Inhibited by EGTA. Crucial player in the regulation of plasma cholesterol homeostasis. Binds to low-density lipid receptor family members: low density lipoprotein receptor (LDLR), very low density lipoprotein receptor (VLDLR), apolipoprotein E receptor (LRP1/APOER) and apolipoprotein receptor 2 (LRP8/APOER2), and promotes their degradation in intracellular acidic compartments. Acts via a non-proteolytic mechanism to enhance the degradation of the hepatic LDLR through a clathrin LDLRAP1/ARH-mediated pathway. May prevent the recycling of LDLR from endosomes to the cell surface or direct it to lysosomes for degradation. Can induce ubiquitination of LDLR leading to its subsequent degradation. Inhibits intracellular degradation of APOB via the autophagosome/lysosome pathway in a LDLR-independent manner. Involved in the disposal of non-acetylated intermediates of BACE1 in the early secretory pathway. Inhibits epithelial Na(+) channel (ENaC)-mediated Na(+) absorption by reducing ENaC surface expression primarily by increasing its proteasomal degradation. Regulates neuronal apoptosis via modulation of LRP8/APOER2 levels and related anti-apoptotic signaling pathways. The protein is Proprotein convertase subtilisin/kexin type 9 (PCSK9) of Lagothrix lagotricha (Brown woolly monkey).